Reading from the N-terminus, the 579-residue chain is Protein LYRIC (579 aa).

Over 1–48 the chain is Lumenal; sequence MAARSWQDELAQQAEEGSARLRELLSVGLGFLRTELGLDLGLEPKRYP. Residues 1–71 form an activation of NF-kappa-B region; that stretch reads MAARSWQDEL…LLLFLLGYGW (71 aa). The helical transmembrane segment at 49–69 threads the bilayer; the sequence is GWVILVGTGALGLLLLFLLGY. Topologically, residues 70-579 are cytoplasmic; the sequence is GWAAACAGAR…KKKKKARRET (510 aa). The interval 72-168 is interaction with BCCIP; that stretch reads AAACAGARKK…EKSKKNKKKS (97 aa). A disordered region spans residues 78–222; that stretch reads ARKKRRSPPR…SGSLDSTIPG (145 aa). The interval 100-204 is interaction with RELA; the sequence is DDLAQLKNLR…ISHREKRQQR (105 aa). The span at 108–126 shows a compositional bias: basic and acidic residues; the sequence is LRSEEQKKKNRKKLPEKPK. The segment covering 159–168 has biased composition (basic residues); sequence EKSKKNKKKS. S179 is modified (phosphoserine). Positions 197 to 207 are enriched in basic residues; the sequence is HREKRQQRKRD. Phosphoserine is present on residues S215 and S250. Residue K263 is modified to N6-acetyllysine. A disordered region spans residues 277–579; it reads NLTVNGGGWS…KKKKKARRET (303 aa). 3 positions are modified to phosphoserine: S297, S303, and S308. A compositionally biased stretch (polar residues) spans 317–329; the sequence is SAWTQDTGDTNAN. Residues S341 and S366 each carry the phosphoserine modification. 3 stretches are compositionally biased toward polar residues: residues 351–369, 380–391, and 410–420; these read EPVSQSTTSDYQWDVSRNQ, NGLSSADPSSDW, and LKSQEPISNDQ. The segment at 378-440 is lung-homing for mammary tumors; the sequence is GLNGLSSADP…EGALPTGKSK (63 aa). Residues S412 and S423 each carry the phosphoserine modification. A compositionally biased stretch (basic and acidic residues) spans 421 to 431; that stretch reads KVSDDDKEKGE. The segment covering 438-448 has biased composition (basic residues); sequence KSKKKKKKKKK. Residues 449–470 are compositionally biased toward basic and acidic residues; sequence QGEDNSHTQDTEDLEKDTREEL. Phosphoserine occurs at positions 454, 475, 491, and 493. Composition is skewed to polar residues over residues 517–533 and 546–565; these read PSITLSKGDSDNSSSQV and NAKQNSVPPSQTKSETNWES. Residue S565 is modified to Phosphoserine. Residues 568–579 are compositionally biased toward basic residues; that stretch reads QIKKKKKARRET.

In terms of assembly, interacts with BCCIP, CREBBP/CBP and RELA/p65. In terms of tissue distribution, in the mammary gland, expressed at the apical surface of epithelial cells lining ducts, as well as in the mammary fat pad. Not detected in the spleen, kidney, lung, or skin; minute amounts seen in the liver. Expressed in Purkinje neurons in the early postnatal and adult cerebellum. Overexpressed in mammary tumors (at protein level).

Its subcellular location is the endoplasmic reticulum membrane. It localises to the nucleus membrane. The protein localises to the cell junction. The protein resides in the tight junction. It is found in the nucleus. Its subcellular location is the nucleolus. It localises to the cytoplasm. The protein localises to the perinuclear region. Functionally, down-regulates SLC1A2/EAAT2 promoter activity when expressed ectopically. Activates the nuclear factor kappa-B (NF-kappa-B) transcription factor. Promotes anchorage-independent growth of immortalized melanocytes and astrocytes which is a key component in tumor cell expansion. Promotes lung metastasis and also has an effect on bone and brain metastasis, possibly by enhancing the seeding of tumor cells to the target organ endothelium. Induces chemoresistance. In Mus musculus (Mouse), this protein is Protein LYRIC (Mtdh).